A 98-amino-acid polypeptide reads, in one-letter code: DNA-binding protein Fis (98 aa).

Residues 74–93 (QTRAAVMMGINRGTLRKKLK) constitute a DNA-binding region (H-T-H motif).

It belongs to the transcriptional regulatory Fis family. In terms of assembly, homodimer.

Its function is as follows. Activates ribosomal RNA transcription. Plays a direct role in upstream activation of rRNA promoters. This Aeromonas hydrophila subsp. hydrophila (strain ATCC 7966 / DSM 30187 / BCRC 13018 / CCUG 14551 / JCM 1027 / KCTC 2358 / NCIMB 9240 / NCTC 8049) protein is DNA-binding protein Fis.